Consider the following 368-residue polypeptide: o-succinylbenzoate synthase (368 aa).

Lys183 (proton donor) is an active-site residue. The Mg(2+) site is built by Asp213, Glu239, and Asp264. Lys290 acts as the Proton acceptor in catalysis.

It belongs to the mandelate racemase/muconate lactonizing enzyme family. MenC type 1 subfamily. As to quaternary structure, monomer. A divalent metal cation serves as cofactor.

The catalysed reaction is (1R,6R)-6-hydroxy-2-succinyl-cyclohexa-2,4-diene-1-carboxylate = 2-succinylbenzoate + H2O. The protein operates within quinol/quinone metabolism; 1,4-dihydroxy-2-naphthoate biosynthesis; 1,4-dihydroxy-2-naphthoate from chorismate: step 4/7. Its pathway is cofactor biosynthesis; phylloquinone biosynthesis. Functionally, converts 2-succinyl-6-hydroxy-2,4-cyclohexadiene-1-carboxylate (SHCHC) to 2-succinylbenzoate (OSB). Does not show N-succinylamino acid racemase (NSAR) activity with N-succinyl-L-phenylglycine as substrate. The protein is o-succinylbenzoate synthase of Desulfotalea psychrophila (strain LSv54 / DSM 12343).